We begin with the raw amino-acid sequence, 431 residues long: MGKNVVVLGTQWGDEGKGKIVDLLTEQAKYVVRYQGGHNAGHTLVINGDKTVLHLIPSGILRDNVKCIIGNGVVLAPDALMKEINMLKERGIPVEERLLISEACPLILPFHSALDIAREKARGNKAIGTTGRGIGPAYEDKISRRGLRVGDLFNAELFAEKLKEVMAYHNFMLTEYYKVDAVDYEQTLSDALALADYLKSMCVDVTELLDNARKAGEPILFEGAQGTLLDIDHGTYPFVTSSNTTAGGVATGSGFGPRHLDYVLGIMKAYTTRVGAGPFPTELLCEVGDHLGTKGHEFGATTGRKRRPGWLDAVAMRRAVQINSVSGFCLTKLDVLDGLKEVKICVGYQHPDGTISKVTPLAAEGYEQVTPVYETMPGWSESTFGATFLEQLPQAAINYIKRIEELLETPIDIISTGPDRNETMILVSPFN.

GTP-binding positions include 13 to 19 (GDEGKGK) and 41 to 43 (GHT). The active-site Proton acceptor is the D14. The Mg(2+) site is built by D14 and G41. Residues 14 to 17 (DEGK), 39 to 42 (NAGH), T130, R144, Q225, T240, and R304 each bind IMP. Catalysis depends on H42, which acts as the Proton donor. 300 to 306 (ATTGRKR) contributes to the substrate binding site. GTP contacts are provided by residues R306, 332–334 (KLD), and 415–417 (STG).

Belongs to the adenylosuccinate synthetase family. As to quaternary structure, homodimer. It depends on Mg(2+) as a cofactor.

The protein resides in the cytoplasm. The enzyme catalyses IMP + L-aspartate + GTP = N(6)-(1,2-dicarboxyethyl)-AMP + GDP + phosphate + 2 H(+). It participates in purine metabolism; AMP biosynthesis via de novo pathway; AMP from IMP: step 1/2. Its function is as follows. Plays an important role in the de novo pathway of purine nucleotide biosynthesis. Catalyzes the first committed step in the biosynthesis of AMP from IMP. This chain is Adenylosuccinate synthetase, found in Shewanella oneidensis (strain ATCC 700550 / JCM 31522 / CIP 106686 / LMG 19005 / NCIMB 14063 / MR-1).